Here is a 442-residue protein sequence, read N- to C-terminus: D-serine dehydratase 2 (442 aa).

Lysine 118 carries the post-translational modification N6-(pyridoxal phosphate)lysine.

It belongs to the serine/threonine dehydratase family. DsdA subfamily. Monomer. Requires pyridoxal 5'-phosphate as cofactor.

It catalyses the reaction D-serine = pyruvate + NH4(+). The chain is D-serine dehydratase 2 from Escherichia coli O6:K15:H31 (strain 536 / UPEC).